The following is a 185-amino-acid chain: Elongation factor P (185 aa).

The protein belongs to the elongation factor P family.

Its subcellular location is the cytoplasm. The protein operates within protein biosynthesis; polypeptide chain elongation. Functionally, involved in peptide bond synthesis. Stimulates efficient translation and peptide-bond synthesis on native or reconstituted 70S ribosomes in vitro. Probably functions indirectly by altering the affinity of the ribosome for aminoacyl-tRNA, thus increasing their reactivity as acceptors for peptidyl transferase. This Bacillus licheniformis (strain ATCC 14580 / DSM 13 / JCM 2505 / CCUG 7422 / NBRC 12200 / NCIMB 9375 / NCTC 10341 / NRRL NRS-1264 / Gibson 46) protein is Elongation factor P.